A 207-amino-acid chain; its full sequence is Small ribosomal subunit protein uS2 (207 aa).

This sequence belongs to the universal ribosomal protein uS2 family.

The polypeptide is Small ribosomal subunit protein uS2 (Methanocella arvoryzae (strain DSM 22066 / NBRC 105507 / MRE50)).